A 166-amino-acid chain; its full sequence is tRNA-acetylating toxin (166 aa).

The segment at Met-1–Gly-22 is disordered. Positions Met-1–Ala-162 constitute an N-acetyltransferase domain. Residue Tyr-138 is part of the active site.

It belongs to the acetyltransferase family. GNAT subfamily. In terms of assembly, homodimer, forms a complex with cognate antitoxin TacA.

The enzyme catalyses glycyl-tRNA(Gly) + acetyl-CoA = N-acetylglycyl-tRNA(Gly) + CoA + H(+). In terms of biological role, toxic component of a type II toxin-antitoxin (TA) system. Overexpression of this gene alone in M.smegmatis inhibits growth, while overexpression of the tacA-tacT operon does not. Acetylates glycyl-tRNA(Gly) but not other tRNAs, blocks in vitro translation in the presence, but not absence, of acetyl-coenzyme A. Peptidyl-tRNA hydrolase (pth) counteracts the product of this enzyme in vitro. Neutralized by cognate antitoxin TacA. Does not seem to be active in laboratory growth conditions. Its function is as follows. TacA-TacT both represses and derepresses expression of its own operon. This is tRNA-acetylating toxin from Mycobacterium tuberculosis (strain ATCC 25618 / H37Rv).